A 265-amino-acid polypeptide reads, in one-letter code: 4-diphosphocytidyl-2-C-methyl-D-erythritol kinase (265 aa).

Lys-8 is a catalytic residue. 95 to 105 (PIGAGLGGGSS) contacts ATP. Asp-135 is a catalytic residue.

This sequence belongs to the GHMP kinase family. IspE subfamily.

The catalysed reaction is 4-CDP-2-C-methyl-D-erythritol + ATP = 4-CDP-2-C-methyl-D-erythritol 2-phosphate + ADP + H(+). Its pathway is isoprenoid biosynthesis; isopentenyl diphosphate biosynthesis via DXP pathway; isopentenyl diphosphate from 1-deoxy-D-xylulose 5-phosphate: step 3/6. Catalyzes the phosphorylation of the position 2 hydroxy group of 4-diphosphocytidyl-2C-methyl-D-erythritol. The sequence is that of 4-diphosphocytidyl-2-C-methyl-D-erythritol kinase from Ureaplasma urealyticum serovar 10 (strain ATCC 33699 / Western).